A 325-amino-acid polypeptide reads, in one-letter code: Cln5-like protein 2 (325 aa).

The N-terminal stretch at 1–19 (MNKLIFIIICLGIVDKTIS) is a signal peptide. N-linked (GlcNAc...) asparagine glycosylation is found at Asn-88, Asn-117, Asn-133, Asn-163, Asn-182, Asn-189, Asn-238, and Asn-262.

It belongs to the CLN5 family.

The chain is Cln5-like protein 2 (cln5lb) from Dictyostelium discoideum (Social amoeba).